The following is a 155-amino-acid chain: Small ribosomal subunit protein uS7 (155 aa).

The protein belongs to the universal ribosomal protein uS7 family. In terms of assembly, part of the 30S ribosomal subunit. Contacts proteins S9 and S11.

Its function is as follows. One of the primary rRNA binding proteins, it binds directly to 16S rRNA where it nucleates assembly of the head domain of the 30S subunit. Is located at the subunit interface close to the decoding center, probably blocks exit of the E-site tRNA. This chain is Small ribosomal subunit protein uS7, found in Fervidobacterium nodosum (strain ATCC 35602 / DSM 5306 / Rt17-B1).